The sequence spans 293 residues: FAS1 domain-containing protein DEHA2G15708g (293 aa).

The first 18 residues, 1 to 18, serve as a signal peptide directing secretion; it reads MKLSSILYVSVLAHLVMS. Positions 76–87 are enriched in basic and acidic residues; it reads DHIGENEKREAK. The disordered stretch occupies residues 76–126; the sequence is DHIGENEKREAKNVYNLQSLKEGLDDENDKREGNVNKPEVSEEGSNKGDKR. An FAS1 domain is found at 141 to 290; that stretch reads QNLLQSILPQ…GYIFVINDVL (150 aa).

It localises to the vacuole. This Debaryomyces hansenii (strain ATCC 36239 / CBS 767 / BCRC 21394 / JCM 1990 / NBRC 0083 / IGC 2968) (Yeast) protein is FAS1 domain-containing protein DEHA2G15708g.